A 39-amino-acid chain; its full sequence is Cecropin-D-like peptide (39 aa).

Hemolymph.

The protein localises to the secreted. Its function is as follows. Cecropins have lytic and antibacterial activity against several Gram-positive and Gram-negative bacteria. Has antibacterial activity against the Gram-positive bacteria M.luteus (MIC=34.4 uM), L.monocytogenes (MIC=34.4 uM), and S.lutea (MIC=34.4 uM), and the Gram-negative bacterium E.coli D31 (MIC=8.6 uM). Lacks antibacterial activity against the Gram-positive bacterium B.circulans, and the Gram-negative bacteria E.coli ATCC 25922 and S.typhimurium. Has antifungal activity against A.niger, but lacks antifungal activity against C.albicans, C.wickerhamii, F.oxysporum, P.pastoris, P.tannophilus, S.cerevisiae, T.harzianum, and Z.marxianus. The sequence is that of Cecropin-D-like peptide from Galleria mellonella (Greater wax moth).